An 86-amino-acid polypeptide reads, in one-letter code: Cell division topological specificity factor (86 aa).

This sequence belongs to the MinE family.

Its function is as follows. Prevents the cell division inhibition by proteins MinC and MinD at internal division sites while permitting inhibition at polar sites. This ensures cell division at the proper site by restricting the formation of a division septum at the midpoint of the long axis of the cell. In Shewanella frigidimarina (strain NCIMB 400), this protein is Cell division topological specificity factor.